A 125-amino-acid polypeptide reads, in one-letter code: Small ribosomal subunit protein uS12m (125 aa).

Residues 1-51 form a disordered region; that stretch reads MPTKNQLIRHGREEKRRTDRTRALDQCPQKQGVCPRVSTRTPKKPNSAPRK. The segment covering 10–23 has biased composition (basic and acidic residues); that stretch reads HGREEKRRTDRTRA.

Belongs to the universal ribosomal protein uS12 family.

The protein resides in the mitochondrion. Functionally, protein S12 is involved in the translation initiation step. This is Small ribosomal subunit protein uS12m (RPS12) from Nicotiana sylvestris (Wood tobacco).